The following is a 759-amino-acid chain: MTQDKCPFKEQPSQPNFAGGGTSNKDWWPDRLKLNILRQHTAVSNPLDADFDYAAAFKSLDYEALKKDLRALMTDSQDWWPADFGHYGGLFIRMAWHSAGTYRVFDGRGGAGQGQQRFAPLNSWPDNVSLDKARRLLWPIKQKYGNKISWADLMILTGNVALESMGFKTFGFAGGRPDTWEADEATYWGRETTWLGNDARYAKGFSGSDKRGTLIADEDSHKTTHSRELETPLAAAHMGLIYVNPEGPDGNPDPIAAAHDIRDTFGRMAMNDEETVALIAGGHTFGKTHGAAPADNVGKEPEAAGLEAQGLGWANKHGSGKGPDTITSGLEVTWTKTPTQWSNNFLEYLFKFEWELTKSPAGAHQWVAKNADEIIPHAYDASKKRKPTMLTTDLSLRFDPAYEKIARRFLEHPDQFADAFARAWFKLTHRDMGPRARYLGPEVPSEVLIWQDPIPAVNHPLVDASDIATLKDEILASGVPFRSFISTAWAAASTFRGSDKRGGANGARIRLAPQRDWEANNQPWLREALSALEAVQSRFNSRGDGKKVSLADLIVLAGCAAVEKAAQDAGHPIKVPFVPGRMDASQEETDVQSFSHMEPFADGFRNFAKGPARPRAEHYLVDKAQLLNLSAPEMTVLVGGLRVLNTNYDGSAHGVFTSRPGALSNDFFVHLLDMNTAWKDAGNGELFEGSDRKTGGKKWTATRADLVFGSNAELRAIAEVYASNDGDMKFVKDFVAAWNKVMNLDRFDLKGKQTIPARL.

The tract at residues 1–24 is disordered; it reads MTQDKCPFKEQPSQPNFAGGGTSN. Positions 96–242 form a cross-link, tryptophyl-tyrosyl-methioninium (Trp-Tyr) (with M-268); sequence WHSAGTYRVF…LAAAHMGLIY (147 aa). Catalysis depends on H97, which acts as the Proton acceptor. The tryptophyl-tyrosyl-methioninium (Tyr-Met) (with W-96) cross-link spans 242 to 268; it reads YVNPEGPDGNPDPIAAAHDIRDTFGRM. Residue H283 participates in heme b binding.

The protein belongs to the peroxidase family. Peroxidase/catalase subfamily. In terms of assembly, homodimer or homotetramer. The cofactor is heme b. In terms of processing, formation of the three residue Trp-Tyr-Met cross-link is important for the catalase, but not the peroxidase activity of the enzyme.

It localises to the cytoplasm. The enzyme catalyses H2O2 + AH2 = A + 2 H2O. It catalyses the reaction 2 H2O2 = O2 + 2 H2O. Bifunctional enzyme with both catalase and broad-spectrum peroxidase activity. This is Catalase-peroxidase from Neosartorya fischeri (strain ATCC 1020 / DSM 3700 / CBS 544.65 / FGSC A1164 / JCM 1740 / NRRL 181 / WB 181) (Aspergillus fischerianus).